The chain runs to 408 residues: Arginine biosynthesis bifunctional protein ArgJ (408 aa).

The substrate site is built by Thr158, Lys184, Thr195, Glu281, Asn403, and Thr408. Residue Thr195 is the Nucleophile of the active site.

Belongs to the ArgJ family. In terms of assembly, heterotetramer of two alpha and two beta chains.

The protein localises to the cytoplasm. The enzyme catalyses N(2)-acetyl-L-ornithine + L-glutamate = N-acetyl-L-glutamate + L-ornithine. It catalyses the reaction L-glutamate + acetyl-CoA = N-acetyl-L-glutamate + CoA + H(+). It functions in the pathway amino-acid biosynthesis; L-arginine biosynthesis; L-ornithine and N-acetyl-L-glutamate from L-glutamate and N(2)-acetyl-L-ornithine (cyclic): step 1/1. The protein operates within amino-acid biosynthesis; L-arginine biosynthesis; N(2)-acetyl-L-ornithine from L-glutamate: step 1/4. Its function is as follows. Catalyzes two activities which are involved in the cyclic version of arginine biosynthesis: the synthesis of N-acetylglutamate from glutamate and acetyl-CoA as the acetyl donor, and of ornithine by transacetylation between N(2)-acetylornithine and glutamate. The polypeptide is Arginine biosynthesis bifunctional protein ArgJ (Bacillus thuringiensis subsp. konkukian (strain 97-27)).